Reading from the N-terminus, the 188-residue chain is Protein GrpE (188 aa).

A compositionally biased stretch (basic and acidic residues) spans 1-16 (MEERNEQVVEEVKEAQ). Residues 1–31 (MEERNEQVVEEVKEAQVEEAVTPENSEETVE) are disordered.

Belongs to the GrpE family. In terms of assembly, homodimer.

The protein localises to the cytoplasm. Participates actively in the response to hyperosmotic and heat shock by preventing the aggregation of stress-denatured proteins, in association with DnaK and GrpE. It is the nucleotide exchange factor for DnaK and may function as a thermosensor. Unfolded proteins bind initially to DnaJ; upon interaction with the DnaJ-bound protein, DnaK hydrolyzes its bound ATP, resulting in the formation of a stable complex. GrpE releases ADP from DnaK; ATP binding to DnaK triggers the release of the substrate protein, thus completing the reaction cycle. Several rounds of ATP-dependent interactions between DnaJ, DnaK and GrpE are required for fully efficient folding. This is Protein GrpE from Bacillus anthracis.